The following is a 300-amino-acid chain: Probable lipid kinase YegS-like (300 aa).

In terms of domain architecture, DAGKc spans 1–129 (MSKKALLILH…CDVIRVNNHY (129 aa)). Residues Thr-38, 64–70 (GDGSVRD), and Thr-92 contribute to the ATP site. 3 residues coordinate Mg(2+): Leu-210, Asp-213, and Leu-215. The active-site Proton acceptor is the Glu-272.

It belongs to the diacylglycerol/lipid kinase family. YegS lipid kinase subfamily. Mg(2+) is required as a cofactor. The cofactor is Ca(2+).

The protein localises to the cytoplasm. Functionally, probably phosphorylates lipids; the in vivo substrate is unknown. This is Probable lipid kinase YegS-like from Alcanivorax borkumensis (strain ATCC 700651 / DSM 11573 / NCIMB 13689 / SK2).